The sequence spans 132 residues: MPTINQLVRKGREKVRKKSKVPALKGAPFRRGVCTVVRTVTPKKPNSALRKVAKVRLTSGYEVTAYIPGEGHNLQEHSVVLIRGGRVKDLPGVRYHIVRGVYDAAGVKDRKKSRSKYGTKKPKEAAKTAAKK.

D89 is modified (3-methylthioaspartic acid). The segment at 106 to 132 is disordered; that stretch reads GVKDRKKSRSKYGTKKPKEAAKTAAKK. Over residues 109–120 the composition is skewed to basic residues; that stretch reads DRKKSRSKYGTK.

The protein belongs to the universal ribosomal protein uS12 family. As to quaternary structure, part of the 30S ribosomal subunit. Contacts proteins S8 and S17. May interact with IF1 in the 30S initiation complex.

In terms of biological role, with S4 and S5 plays an important role in translational accuracy. Its function is as follows. Interacts with and stabilizes bases of the 16S rRNA that are involved in tRNA selection in the A site and with the mRNA backbone. Located at the interface of the 30S and 50S subunits, it traverses the body of the 30S subunit contacting proteins on the other side and probably holding the rRNA structure together. The combined cluster of proteins S8, S12 and S17 appears to hold together the shoulder and platform of the 30S subunit. This Thermus thermophilus (strain ATCC BAA-163 / DSM 7039 / HB27) protein is Small ribosomal subunit protein uS12 (rpsL).